Consider the following 480-residue polypeptide: Probable tRNA N6-adenosine threonylcarbamoyltransferase, mitochondrial (480 aa).

The N-terminal 86 residues, 1-86 (MVRLFLTLSP…NPNFDDNLVV (86 aa)), are a transit peptide targeting the mitochondrion. A divalent metal cation is bound by residues His-194 and His-198. Substrate-binding positions include 217 to 221 (LISGG), Asp-250, Gly-265, Glu-269, 373 to 374 (SN), and Thr-401. Asp-402 contacts a divalent metal cation.

Belongs to the KAE1 / TsaD family. As to quaternary structure, homodimer. A divalent metal cation serves as cofactor. In terms of tissue distribution, expressed in young developing leaves, roots, flowers and siliques.

The protein resides in the mitochondrion inner membrane. It catalyses the reaction L-threonylcarbamoyladenylate + adenosine(37) in tRNA = N(6)-L-threonylcarbamoyladenosine(37) in tRNA + AMP + H(+). Functionally, required for the formation of a threonylcarbamoyl group on adenosine at position 37 (t(6)A37) in mitochondrial tRNAs that read codons beginning with adenine. Probably involved in the transfer of the threonylcarbamoyl moiety of threonylcarbamoyl-AMP (TC-AMP) to the N6 group of A37. Involved in mitochondrial genome maintenance. May have a role in embryonic development in plants. This is Probable tRNA N6-adenosine threonylcarbamoyltransferase, mitochondrial from Arabidopsis thaliana (Mouse-ear cress).